Reading from the N-terminus, the 119-residue chain is Ribosome-binding factor A (119 aa).

Belongs to the RbfA family. In terms of assembly, monomer. Binds 30S ribosomal subunits, but not 50S ribosomal subunits or 70S ribosomes.

It localises to the cytoplasm. Its function is as follows. One of several proteins that assist in the late maturation steps of the functional core of the 30S ribosomal subunit. Associates with free 30S ribosomal subunits (but not with 30S subunits that are part of 70S ribosomes or polysomes). Required for efficient processing of 16S rRNA. May interact with the 5'-terminal helix region of 16S rRNA. The sequence is that of Ribosome-binding factor A from Ligilactobacillus salivarius (strain UCC118) (Lactobacillus salivarius).